Here is a 389-residue protein sequence, read N- to C-terminus: Oxysterol-binding protein 1 (389 aa).

Coiled coils occupy residues M1–A31 and K340–K371. Residues M1 to D43 are disordered.

This sequence belongs to the OSBP family. In terms of assembly, interacts with dstC.

It is found in the cytoplasm. Its function is as follows. May play a role in the regulation of the slug-fruiting body switch. This Dictyostelium discoideum (Social amoeba) protein is Oxysterol-binding protein 1 (osbA).